The chain runs to 523 residues: LLLLLQLSCCFSSGSCGKVLVWPMEFSHWMNMKTILDALVQRGHAVTVLRSSASILVNSNDESGITFETFPTTSTKDEMEAFFMYWLNKLTNDVSKDALWEYFQTWQKFFMEYSDNYENICKDLVLNKKIMAKLQESRFDVVLADPIAPCGELLAELLNRPLVYSVRFTPGYTYEKYSGGLLFPPSYVPVIMSDLSGQMTFMERVKNMLWMLYFDFWFQMLNVKRWDQFCSEVLGRPVTFSELVGKAEIWLIRSYWDLEFPRPLLPNSYFVGGLHCKPAQPLPKEMEEFVQSSGEEGVVVFSLGSMISNLTEERANVIASTLAQLPQKVLWKFDGKKPDNLGTNTQLYKWIPQNDLLGHTVSKAFITHGGANGVFEAIYHGIPMVGLPLFADQHDNLAHMRAKGAAIRLDWKTMSSSDFLNALKTVINDPSYKEKAMTLSRIHHDQPMKPLDQAIFWIEFVMRHKGAKHLRVAAHDLTWFQYHSLDVIGFLLACLTITTYLVIKCWLLVYQNILMTGKKKKRD.

The N-terminal stretch at 1 to 16 (LLLLLQLSCCFSSGSC) is a signal peptide. Position 129 is an N6-succinyllysine (Lys129). An N-linked (GlcNAc...) asparagine glycan is attached at Asn309. Residues 487-503 (VIGFLLACLTITTYLVI) traverse the membrane as a helical segment.

This sequence belongs to the UDP-glycosyltransferase family.

The protein resides in the microsome membrane. It is found in the endoplasmic reticulum membrane. The catalysed reaction is glucuronate acceptor + UDP-alpha-D-glucuronate = acceptor beta-D-glucuronoside + UDP + H(+). In terms of biological role, UDPGT is of major importance in the conjugation and subsequent elimination of potentially toxic xenobiotics and endogenous compounds. Acts on small phenolic agents such as 2-beta-naphthol and 4-methylumbelliferone as well as bulky phenolic compounds like 2-hydroxy- and 4-hydroxybiphenyl. In contrast to 2B13 it is active toward 4-hydroxyesterone. This Oryctolagus cuniculus (Rabbit) protein is UDP-glucuronosyltransferase 2B16 (UGT2B16).